Here is a 159-residue protein sequence, read N- to C-terminus: MGVFNVEDEITSVVAPAILYKALVTDADTLTPKVIDAIKSIEIVEGNGGAGTIKKLTFVEDGETKHVLHKVELVDVANLAYNYSIVGGVGFPDTVEKISFEAKLSAGPNGGSIAKLSVKYYTKGDAAAPTEEQLKSDKAKGDGLFKALERYCLAHPDYN.

This sequence belongs to the BetVI family.

The chain is Disease resistance response protein Pi176 from Pisum sativum (Garden pea).